The chain runs to 48 residues: ATP synthase protein 8 (48 aa).

At M1 the chain carries N-formylmethionine. At M1 to Q12 the chain is on the mitochondrial intermembrane side. The chain crosses the membrane as a helical span at residues L13 to P33. The Mitochondrial matrix segment spans residues Y34–L48.

In terms of assembly, F-type ATP synthases have 2 components, the catalytic core F(1) and the membrane-embedded component F(0), linked together by a central stalk and a peripheral stalk. The central stalk, also called rotor shaft, is often seen as part of F(1). The peripheral stalk is seen as part of F(0). F(0) contains the membrane channel next to the rotor. F-type ATP synthases form dimers but each monomer functions independently in ATP generation. The dimer consists of 18 different polypeptides: ATP1 (subunit alpha, part of F(1), 3 molecules per monomer), ATP2 (subunit beta, part of F(1), 3 molecules per monomer), ATP3 (subunit gamma, part of the central stalk), ATP4 (subunit b, part of the peripheral stalk), ATP5/OSCP (subunit 5/OSCP, part of the peripheral stalk), ATP6 (subunit a, part of the peripheral stalk), ATP7 (subunit d, part of the peripheral stalk), ATP8 (subunit 8, part of the peripheral stalk), OLI1 (subunit c, part of the rotor, 10 molecules per monomer), ATP14 (subunit h, part of the peripheral stalk), ATP15 (subunit epsilon, part of the central stalk), ATP16 (subunit delta, part of the central stalk), ATP17 (subunit f, part of the peripheral stalk), ATP18 (subunit i/j, part of the peripheral stalk). Dimer-specific subunits are ATP19 (subunit k, at interface between monomers), ATP20 (subunit g, at interface between monomers), TIM11 (subunit e, at interface between monomers). Also contains subunit L.

Its subcellular location is the mitochondrion inner membrane. Its function is as follows. Mitochondrial membrane ATP synthase (F(1)F(0) ATP synthase or Complex V) produces ATP from ADP in the presence of a proton gradient across the membrane which is generated by electron transport complexes of the respiratory chain. F-type ATP synthases consist of two structural domains, F(1) - containing the extramembraneous catalytic core, and F(0) - containing the membrane proton channel, linked together by a central stalk and a peripheral stalk. During catalysis, ATP synthesis in the catalytic domain of F(1) is coupled via a rotary mechanism of the central stalk subunits to proton translocation. Part of the complex F(0) domain. Minor subunit located with subunit a/ATP6 in the membrane. The protein is ATP synthase protein 8 of Pichia angusta (Yeast).